Here is a 484-residue protein sequence, read N- to C-terminus: MEETTKQNNMKKKKKILLHSDDSKKKERHIVTWSPEEDDILRKQISLQGTENWAIIASKFNDKSTRQCRRRWYTYLNSDFKRGGWSPEEDTLLCEAQRLFGNRWTEIAKVVSGRTDNAVKNRFTTLCKKRAKHEAMAKENRIACCVNSDNKRLLFPDGISTPLKAESESPLTKKMRRSHIPNLTEIKSYGDRSHIKVESTMNQQRRHPFSVVAHNATSSDGTEEQKQIGNVKESDGEDKSNQEVFLKKDDSKVTALMQQAELLSSLAQKVNADNTDQSMENAWKVLQDFLNKSKENDLFRYGIPDIDFQLDEFKDLVEDLRSSNEDSQSSWRQPDLHDSPASSEYSSGSGSGSTIMTHPSGDKTQQLMSDTQTTSHQQNGGELLQDNGIVSDATVEQVGLLSTGHDVLKNSNETVPIPGEEEFNSPVQVTPLFRSLAAGIPSPQFSESERNFLLKTLGVESPSPYPSANPSQPPPCKRVLLDSL.

Positions 1-20 (MEETTKQNNMKKKKKILLHS) are disordered. The short motif at 13 to 20 (KKKILLHS) is the Nuclear localization signal element. HTH myb-type domains are found at residues 25-76 (KKER…YTYL) and 77-131 (NSDF…KKRA). DNA-binding regions (H-T-H motif) lie at residues 53–76 (WAII…YTYL) and 104–127 (WTEI…TTLC). Disordered stretches follow at residues 215–241 (NATS…DKSN), 321–383 (RSSN…GGEL), and 458–484 (GVES…LDSL). Residues 232 to 241 (KESDGEDKSN) are compositionally biased toward basic and acidic residues. The segment covering 339 to 348 (SPASSEYSSG) has biased composition (low complexity). Residues 354 to 380 (TIMTHPSGDKTQQLMSDTQTTSHQQNG) show a composition bias toward polar residues. The span at 463 to 476 (SPYPSANPSQPPPC) shows a compositional bias: pro residues.

In terms of assembly, interacts with RBR1. As to expression, expressed at low levels in all organs including roots, leaves, hypocotyls stems, flowers, siliques and buds.

It localises to the nucleus. Transcription factor that binds to DNA in promoters cis-regulatory element 5'-GGCGCGC-3' of cell cycle genes, including cyclins, cyclin-dependent kinases (CDKs), and components of the pre-replication complex. Binds to DNA in promoters cis-regulatory element 5'-AGCCG-3' of auxin regulated genes (e.g. PIN3 and PIN7). Together with FAMA and MYB124, ensures that stomata contain just two guard cells (GCs) by enforcing a single symmetric precursor cell division before stomatal maturity. Represses the expression of the mitosis-inducing factors CDKB1-1 and CDKA-1, specifically required for the last guard mother cells (GMC) symmetric divisions in the stomatal pathway. Represses CYCA2-3 in newly formed guard cells. Together with MYB88, regulates stomata spacing by restricting divisions late in the stomatal cell lineage thus limiting the number of GMC divisions. In collaboration with CDKB1-1 and CDKB1-2, restrict the G1/S transition and chloroplast and nuclear number during stomatal formation, and normally maintain fate and developmental progression throughout the stomatal cell lineage. Involved in sensing and/or transducing abiotic stress (e.g. drought and salt), probably via the positive regulation of NAC019. Regulates female reproduction being required for entry into megasporogenesis, probably via the regulation of cell cycle genes. Plays a minor role in lateral roots (LRs) initiation. Involved complementarily in establishing the gravitropic set-point angles of lateral roots by regulating the transcription of PIN3 and PIN7 in gravity-sensing cells of primary and lateral roots. In Arabidopsis thaliana (Mouse-ear cress), this protein is Transcription factor MYB88.